The primary structure comprises 779 residues: Endoribonuclease YSH1 (779 aa).

Zn(2+) is bound by residues His-68, His-70, Asp-72, His-73, His-163, and Asp-184. Residue His-408 is the Proton donor of the active site. His-430 is a Zn(2+) binding site. Ser-517 is modified (phosphoserine; by ATM or ATR).

Belongs to the metallo-beta-lactamase superfamily. RNA-metabolizing metallo-beta-lactamase-like family. CPSF2/YSH1 subfamily. Component of the cleavage and polyadenylation factor (CPF) complex, which is composed of at least PTI1, SYC1, SSU72, GLC7, MPE1, REF2, PFS2, PTA1, YSH1/BRR5, SWD2, CFT2/YDH1, YTH1, CFT1/YHH1, FIP1 and PAP1. Interacts with FIP1, PFS2, RNA14 and YTH1. Zn(2+) serves as cofactor.

The protein resides in the nucleus. Component of the cleavage and polyadenylation factor (CPF) complex, which plays a key role in polyadenylation-dependent pre-mRNA 3'-end formation and cooperates with cleavage factors including the CFIA complex and NAB4/CFIB. Has endonuclease activity. The chain is Endoribonuclease YSH1 (YSH1) from Saccharomyces cerevisiae (strain ATCC 204508 / S288c) (Baker's yeast).